Reading from the N-terminus, the 159-residue chain is Endoribonuclease YbeY (159 aa).

Zn(2+) contacts are provided by histidine 126, histidine 130, and histidine 136.

This sequence belongs to the endoribonuclease YbeY family. Zn(2+) serves as cofactor.

It is found in the cytoplasm. In terms of biological role, single strand-specific metallo-endoribonuclease involved in late-stage 70S ribosome quality control and in maturation of the 3' terminus of the 16S rRNA. This chain is Endoribonuclease YbeY, found in Thermodesulfovibrio yellowstonii (strain ATCC 51303 / DSM 11347 / YP87).